The following is a 254-amino-acid chain: NH(3)-dependent NAD(+) synthetase (254 aa).

Residue 32–39 coordinates ATP; it reads GISGGIDS. Aspartate 38 provides a ligand contact to Mg(2+). Arginine 113 contacts deamido-NAD(+). Position 133 (threonine 133) interacts with ATP. Glutamate 138 serves as a coordination point for Mg(2+). The deamido-NAD(+) site is built by lysine 146 and aspartate 153. ATP contacts are provided by lysine 162 and threonine 184. Residue 244-245 coordinates deamido-NAD(+); that stretch reads HK.

This sequence belongs to the NAD synthetase family. As to quaternary structure, homodimer.

It carries out the reaction deamido-NAD(+) + NH4(+) + ATP = AMP + diphosphate + NAD(+) + H(+). It functions in the pathway cofactor biosynthesis; NAD(+) biosynthesis; NAD(+) from deamido-NAD(+) (ammonia route): step 1/1. In terms of biological role, catalyzes the ATP-dependent amidation of deamido-NAD to form NAD. Uses ammonia as a nitrogen source. The protein is NH(3)-dependent NAD(+) synthetase of Thermococcus kodakarensis (strain ATCC BAA-918 / JCM 12380 / KOD1) (Pyrococcus kodakaraensis (strain KOD1)).